The sequence spans 310 residues: 4-diphosphocytidyl-2-C-methyl-D-erythritol kinase (310 aa).

Lysine 10 is an active-site residue. 102 to 112 serves as a coordination point for ATP; the sequence is PVAGGMAGGSA. Residue aspartate 144 is part of the active site. The segment at 289–310 is disordered; it reads TRTARGPAAGAQLLPGPVGSFA.

It belongs to the GHMP kinase family. IspE subfamily.

The catalysed reaction is 4-CDP-2-C-methyl-D-erythritol + ATP = 4-CDP-2-C-methyl-D-erythritol 2-phosphate + ADP + H(+). It functions in the pathway isoprenoid biosynthesis; isopentenyl diphosphate biosynthesis via DXP pathway; isopentenyl diphosphate from 1-deoxy-D-xylulose 5-phosphate: step 3/6. Its function is as follows. Catalyzes the phosphorylation of the position 2 hydroxy group of 4-diphosphocytidyl-2C-methyl-D-erythritol. In Cutibacterium acnes (strain DSM 16379 / KPA171202) (Propionibacterium acnes), this protein is 4-diphosphocytidyl-2-C-methyl-D-erythritol kinase.